The following is a 354-amino-acid chain: Nicotinate-nucleotide--dimethylbenzimidazole phosphoribosyltransferase (354 aa).

E322 functions as the Proton acceptor in the catalytic mechanism.

It belongs to the CobT family.

The enzyme catalyses 5,6-dimethylbenzimidazole + nicotinate beta-D-ribonucleotide = alpha-ribazole 5'-phosphate + nicotinate + H(+). Its pathway is nucleoside biosynthesis; alpha-ribazole biosynthesis; alpha-ribazole from 5,6-dimethylbenzimidazole: step 1/2. Functionally, catalyzes the synthesis of alpha-ribazole-5'-phosphate from nicotinate mononucleotide (NAMN) and 5,6-dimethylbenzimidazole (DMB). This is Nicotinate-nucleotide--dimethylbenzimidazole phosphoribosyltransferase from Solidesulfovibrio magneticus (strain ATCC 700980 / DSM 13731 / RS-1) (Desulfovibrio magneticus).